The primary structure comprises 257 residues: Imidazole glycerol phosphate synthase subunit HisF (257 aa).

Active-site residues include D11 and D130.

Belongs to the HisA/HisF family. Heterodimer of HisH and HisF.

The protein resides in the cytoplasm. It carries out the reaction 5-[(5-phospho-1-deoxy-D-ribulos-1-ylimino)methylamino]-1-(5-phospho-beta-D-ribosyl)imidazole-4-carboxamide + L-glutamine = D-erythro-1-(imidazol-4-yl)glycerol 3-phosphate + 5-amino-1-(5-phospho-beta-D-ribosyl)imidazole-4-carboxamide + L-glutamate + H(+). The protein operates within amino-acid biosynthesis; L-histidine biosynthesis; L-histidine from 5-phospho-alpha-D-ribose 1-diphosphate: step 5/9. In terms of biological role, IGPS catalyzes the conversion of PRFAR and glutamine to IGP, AICAR and glutamate. The HisF subunit catalyzes the cyclization activity that produces IGP and AICAR from PRFAR using the ammonia provided by the HisH subunit. The polypeptide is Imidazole glycerol phosphate synthase subunit HisF (Shewanella halifaxensis (strain HAW-EB4)).